Consider the following 90-residue polypeptide: Small ribosomal subunit protein uS19 (90 aa).

The protein belongs to the universal ribosomal protein uS19 family.

Functionally, protein S19 forms a complex with S13 that binds strongly to the 16S ribosomal RNA. The polypeptide is Small ribosomal subunit protein uS19 (Mesomycoplasma hyopneumoniae (strain 232) (Mycoplasma hyopneumoniae)).